We begin with the raw amino-acid sequence, 446 residues long: 5-hydroxytryptamine receptor 7 (446 aa).

The Extracellular portion of the chain corresponds to 1–84 (MMGVNSSGRP…INYGRAEKVV (84 aa)). N5 and N67 each carry an N-linked (GlcNAc...) asparagine glycan. A helical membrane pass occupies residues 85-109 (IGSILTLITLLTIAGNCLVVISVCF). Over 110 to 119 (VKKLRQPSNY) the chain is Cytoplasmic. A helical membrane pass occupies residues 120–141 (LIVSLALADLSVAVAVIPFVSV). Topologically, residues 142–153 (TDLIGGKWIFGH) are extracellular. The helical transmembrane segment at 154 to 179 (FFCNVFIAMDVMCCTASIMTLCVISI) threads the bilayer. C156 and C232 form a disulfide bridge. A serotonin-binding site is contributed by D163. The Cytoplasmic portion of the chain corresponds to 180–199 (DRYLGITRPLTYPVRQNGKC). A helical membrane pass occupies residues 200-220 (MPKMILSVWLLSASITLPPLF). Over 221 to 238 (GWAQNVNDDKVCLISQDF) the chain is Extracellular. The helical transmembrane segment at 239-261 (GYTIYSTAVAFYIPMSVMLFMYY) threads the bilayer. Residues 262-327 (RIYKAARKSA…SIFKREQKAA (66 aa)) are Cytoplasmic-facing. A helical transmembrane segment spans residues 328 to 353 (TTLGIIVGAFTVCWLPFFLLSTARPF). The Extracellular segment spans residues 354–364 (ICGTACSCIPL). Residues 365-388 (WVERTCLWLGYANSLINPFIYAFF) traverse the membrane as a helical segment. Over 389–446 (NRDLRTTYRSLLQCQYRNINRKLSAAGMHEALKLAERPERPECVLQNSDYCRKKGHDS) the chain is Cytoplasmic. C402 is lipidated: S-palmitoyl cysteine.

The protein belongs to the G-protein coupled receptor 1 family.

The protein resides in the cell membrane. Functionally, G-protein coupled receptor for 5-hydroxytryptamine (serotonin), a biogenic hormone that functions as a neurotransmitter, a hormone and a mitogen. Ligand binding causes a conformation change that triggers signaling via guanine nucleotide-binding proteins (G proteins) and modulates the activity of downstream effectors. HTR7 is coupled to G(s) G alpha proteins and mediates activation of adenylate cyclase activity. The chain is 5-hydroxytryptamine receptor 7 (HTR7) from Cavia porcellus (Guinea pig).